The primary structure comprises 226 residues: Enolase-phosphatase E1 (226 aa).

Mg(2+) is bound by residues aspartate 9 and glutamate 11. Substrate-binding positions include 115-116 and lysine 160; that span reads SS. Aspartate 185 serves as a coordination point for Mg(2+).

Belongs to the HAD-like hydrolase superfamily. MasA/MtnC family. Monomer. The cofactor is Mg(2+).

The protein localises to the cytoplasm. Its subcellular location is the nucleus. The catalysed reaction is 5-methylsulfanyl-2,3-dioxopentyl phosphate + H2O = 1,2-dihydroxy-5-(methylsulfanyl)pent-1-en-3-one + phosphate. It participates in amino-acid biosynthesis; L-methionine biosynthesis via salvage pathway; L-methionine from S-methyl-5-thio-alpha-D-ribose 1-phosphate: step 3/6. Its pathway is amino-acid biosynthesis; L-methionine biosynthesis via salvage pathway; L-methionine from S-methyl-5-thio-alpha-D-ribose 1-phosphate: step 4/6. Functionally, bifunctional enzyme that catalyzes the enolization of 2,3-diketo-5-methylthiopentyl-1-phosphate (DK-MTP-1-P) into the intermediate 2-hydroxy-3-keto-5-methylthiopentenyl-1-phosphate (HK-MTPenyl-1-P), which is then dephosphorylated to form the acireductone 1,2-dihydroxy-3-keto-5-methylthiopentene (DHK-MTPene). The chain is Enolase-phosphatase E1 from Zygosaccharomyces rouxii (strain ATCC 2623 / CBS 732 / NBRC 1130 / NCYC 568 / NRRL Y-229).